We begin with the raw amino-acid sequence, 275 residues long: tRNA pseudouridine synthase A (275 aa).

Asp56 (nucleophile) is an active-site residue. Tyr114 contacts substrate.

Belongs to the tRNA pseudouridine synthase TruA family. In terms of assembly, homodimer.

It catalyses the reaction uridine(38/39/40) in tRNA = pseudouridine(38/39/40) in tRNA. Functionally, formation of pseudouridine at positions 38, 39 and 40 in the anticodon stem and loop of transfer RNAs. This is tRNA pseudouridine synthase A from Polynucleobacter asymbioticus (strain DSM 18221 / CIP 109841 / QLW-P1DMWA-1) (Polynucleobacter necessarius subsp. asymbioticus).